Consider the following 462-residue polypeptide: Hydroxymethylglutaryl-CoA synthase (462 aa).

The active-site Proton donor/acceptor is the Glu86. Cys120 serves as the catalytic Acyl-thioester intermediate. Residues Cys120, Thr211, His261, Lys270, Asn338, and Ser372 each contribute to the (3S)-3-hydroxy-3-methylglutaryl-CoA site. Catalysis depends on His261, which acts as the Proton donor/acceptor.

The protein belongs to the thiolase-like superfamily. HMG-CoA synthase family.

The catalysed reaction is acetoacetyl-CoA + acetyl-CoA + H2O = (3S)-3-hydroxy-3-methylglutaryl-CoA + CoA + H(+). It participates in siderophore biosynthesis. In terms of biological role, hydroxymethylglutaryl-CoA synthase involved in the biosynthesis of siderophore ferrichrome A which is contributing to organismal virulence. The first step of ferrichrome A biosynthesis is performed by the HMG-CoA synthase hcs1 which catalyzes the generation of HMG-CoA and CoA using acetoacetyl-CoA and acetyl-CoA as substrates. The enoyl-CoA isomerase/hydratase fer4 then catalyzes the conversion of hcs1-produced HMG-CoA to methylglutaconyl-CoA. The acyltransferase fer5 then fuses the fer4-generated methylglutaconyl-CoA with sid1-generated hydroxyornithine to yield methylglutaconyl hydroxyornithine. Methylglutaconyl hydroxyornithine is then available for use by the NRPS fer3 to generate ferrichrome A. The polypeptide is Hydroxymethylglutaryl-CoA synthase (Mycosarcoma maydis (Corn smut fungus)).